We begin with the raw amino-acid sequence, 353 residues long: Chorismate synthase (353 aa).

Residues Arg48 and Arg54 each contribute to the NADP(+) site. Residues 125 to 127 (RSS), 238 to 239 (NA), Gly278, 293 to 297 (KPTSS), and Arg319 each bind FMN.

It belongs to the chorismate synthase family. As to quaternary structure, homotetramer. It depends on FMNH2 as a cofactor.

The catalysed reaction is 5-O-(1-carboxyvinyl)-3-phosphoshikimate = chorismate + phosphate. It participates in metabolic intermediate biosynthesis; chorismate biosynthesis; chorismate from D-erythrose 4-phosphate and phosphoenolpyruvate: step 7/7. Catalyzes the anti-1,4-elimination of the C-3 phosphate and the C-6 proR hydrogen from 5-enolpyruvylshikimate-3-phosphate (EPSP) to yield chorismate, which is the branch point compound that serves as the starting substrate for the three terminal pathways of aromatic amino acid biosynthesis. This reaction introduces a second double bond into the aromatic ring system. This Buchnera aphidicola subsp. Schizaphis graminum (strain Sg) protein is Chorismate synthase.